Here is a 440-residue protein sequence, read N- to C-terminus: Alpha-methylserine aldolase (440 aa).

K255 carries the N6-(pyridoxal phosphate)lysine modification.

The protein belongs to the SHMT family. Alpha-methylserine aldolase subfamily. In terms of assembly, homodimer. Pyridoxal 5'-phosphate serves as cofactor.

The enzyme catalyses 2-methyl-L-serine = formaldehyde + L-alanine. The catalysed reaction is 2-ethyl-L-serine = (2S)-2-aminobutanoate + formaldehyde. In the alpha-methyl-L-serine synthesis reaction, activity is inhibited by an excess amount of formaldehyde (at a concentration greater than 4 mM). Formaldehyde release activity is reduced by the sulfhydryl reagent N-ethylmaleimide, iodoacetate amide and iodoacetic acid, but not by dithiothreitol and 2-mercaptoethanol. Activity is enhanced by 1 mM of manganese chloride. In terms of biological role, catalyzes the reversible interconversion of alpha-methyl-L-serine to L-alanine and formaldehyde. Can also catalyze the synthesis of alpha-ethyl-L-serine from L-2-aminobutyric acid and formaldehyde. Also shows low alanine racemase activity. Cannot use alpha-methyl-D-serine, L-serine, D-serine, (S)-2-amino-1-propanol, (R)-2-amino-1-propanol, (S)-alpha-hydroxymethyltyrosine, (R)-alpha-hydroxymethyltyrosine, alpha-iso-butyl-DL-serine, alpha-iso-propyl-DL-serine or alpha-benzyl-DL-serine. Cannot use D-alanine instead of L-alanine as the substrate for alpha-methyl-L-serine synthesis. Does not require tetrahydrofolate (THF) for activity. The protein is Alpha-methylserine aldolase of Variovorax paradoxus.